Here is a 1010-residue protein sequence, read N- to C-terminus: Protein CROWDED NUCLEI 4 (1010 aa).

Coiled coils occupy residues 82–350 (LLLL…LIQN) and 404–763 (EKEH…NLER). 2 short sequence motifs (nuclear localization signal) span residues 445 to 452 (NRKTTMLE) and 679 to 686 (LKRLDAER). Disordered regions lie at residues 787-813 (GVSTVSNSEDGYNSSMERQNGLTPSSA), 839-937 (HYEE…TQTP), and 966-994 (DCSESPSEAGRKMGEETEDGDCNQTGINA). Over residues 849–863 (EKLKLESSRREEKAY) the composition is skewed to basic and acidic residues. Polar residues-rich tracts occupy residues 883–893 (NTSGDETSEPS) and 912–921 (TQSVISSPQN).

It belongs to the CRWN family. In terms of assembly, core component of the LINC complex which is composed of inner nuclear membrane SUN domain-containing proteins coupled to outer nuclear membrane WIP proteins, the nucleoskeletal CRWN/LINC proteins, and, possibly, KAKU4. Binds to KAKU4. As to expression, expressed at low levels in roots, leaves, flowers and flower stalks.

The protein resides in the nucleus membrane. The protein localises to the nucleus. It is found in the nucleoplasm. It localises to the nucleus lamina. Its subcellular location is the cytoplasm. Its function is as follows. Component of SUN-protein-containing multivariate complexes also called LINC complexes which link the nucleoskeleton and cytoskeleton by providing versatile outer nuclear membrane attachment sites for cytoskeletal filaments. Required for nucleus structure organization (e.g. size and shape). Involved in the maintenance of interphase chromocenter integrity and organization. This chain is Protein CROWDED NUCLEI 4, found in Arabidopsis thaliana (Mouse-ear cress).